The chain runs to 166 residues: Holin-like protein TcdE (166 aa).

Transmembrane regions (helical) follow at residues 15–35, 36–56, 77–97, and 111–131; these read IFFY…LSEH, IFIK…CLSA, MIAC…NFLF, and HLGI…VSIL.

The protein belongs to the bacteriophage holin family. Homomultimer.

It is found in the cell membrane. Its function is as follows. Holin-like protein required for secretion of toxins A and B (TcdA and TcdB). Facilitates the release of toxins to the extracellular environment without causing the bacterial cell lysis. Functionally, has weak activity, suggesting that it may act as a antiholin when multiple forms are produced. This is Holin-like protein TcdE from Clostridioides difficile (Peptoclostridium difficile).